Here is an 89-residue protein sequence, read N- to C-terminus: Small ribosomal subunit protein uS15 (89 aa).

Belongs to the universal ribosomal protein uS15 family. Part of the 30S ribosomal subunit. Forms a bridge to the 50S subunit in the 70S ribosome, contacting the 23S rRNA.

In terms of biological role, one of the primary rRNA binding proteins, it binds directly to 16S rRNA where it helps nucleate assembly of the platform of the 30S subunit by binding and bridging several RNA helices of the 16S rRNA. Functionally, forms an intersubunit bridge (bridge B4) with the 23S rRNA of the 50S subunit in the ribosome. In Granulibacter bethesdensis (strain ATCC BAA-1260 / CGDNIH1), this protein is Small ribosomal subunit protein uS15.